A 77-amino-acid chain; its full sequence is Large ribosomal subunit protein bL28 (77 aa).

This sequence belongs to the bacterial ribosomal protein bL28 family.

This is Large ribosomal subunit protein bL28 from Ralstonia pickettii (strain 12J).